The following is a 200-amino-acid chain: Putative manganese exporter (200 aa).

Transmembrane regions (helical) follow at residues 13-33 (TEHV…AEIG), 53-73 (IIAA…WLGV), 81-101 (PDIL…WILI), 110-130 (SIST…AEIG), 150-170 (WVIV…VLIG), and 180-200 (GLIR…TAFF).

The protein belongs to the GDT1 family.

It localises to the cell inner membrane. In terms of biological role, involved in manganese homeostasis. May function as a manganese exporter. The chain is Putative manganese exporter from Vibrio cholerae serotype O1 (strain ATCC 39541 / Classical Ogawa 395 / O395).